The primary structure comprises 1048 residues: Ceruloplasmin (1048 aa).

The N-terminal stretch at 1–19 (MKIFLLCIFLILCGTSVWA) is a signal peptide. 3 Plastocyanin-like domains span residues 20–200 (KDKH…LIHC), 209–357 (KEKN…VQDC), and 370–554 (NVRH…MKIC). 3 residues coordinate Na(+): tyrosine 55, glycine 64, and tyrosine 67. Cu(2+)-binding residues include histidine 120 and histidine 122. Histidine 120 provides a ligand contact to O2. Lysine 128 is a Ca(2+) binding site. Asparagine 138 is a glycosylation site (N-linked (GlcNAc...) asparagine). Ca(2+) contacts are provided by glutamine 143, aspartate 146, and aspartate 147. The cysteines at positions 174 and 200 are disulfide-linked. 2 residues coordinate Cu(2+): histidine 180 and histidine 182. Histidine 180 contributes to the O2 binding site. Asparagine 227 carries N-linked (GlcNAc...) asparagine glycosylation. Position 256 (serine 256) interacts with Na(+). Cysteine 276 and cysteine 357 are disulfide-bonded. Cu(2+)-binding residues include histidine 295, cysteine 338, and histidine 343. Na(+) is bound by residues phenylalanine 408, glycine 417, and tyrosine 420. The cysteines at positions 530 and 554 are disulfide-linked. N-linked (GlcNAc...) asparagine glycans are attached at residues asparagine 556 and asparagine 582. Positions 564–712 (RLKNVDKEFY…MKQKYTVSQC (149 aa)) constitute a Plastocyanin-like 4 domain. Residue serine 611 coordinates Na(+). A disulfide bond links cysteine 631 and cysteine 712. Residues histidine 650, cysteine 693, histidine 698, and methionine 703 each contribute to the Cu(2+) site. Cysteine 693 functions as the Nucleophile; for glutathione peroxidase activity in the catalytic mechanism. Phosphoserine is present on serine 716. Plastocyanin-like domains lie at 724–894 (GERT…LIVC) and 902–1044 (SNPI…PNEE). A glycan (N-linked (GlcNAc...) asparagine) is linked at asparagine 756. Na(+) is bound by residues phenylalanine 761, glycine 770, and tyrosine 773. A disulfide bond links cysteine 868 and cysteine 894. Residue asparagine 920 is glycosylated (N-linked (GlcNAc...) asparagine). A Na(+)-binding site is contributed by serine 949. Cu(2+) contacts are provided by histidine 977, histidine 980, histidine 982, histidine 1022, cysteine 1023, histidine 1024, histidine 1028, and methionine 1033. Histidine 980 and histidine 982 together coordinate O2. Histidine 1024 lines the O2 pocket.

Belongs to the multicopper oxidase family. As to quaternary structure, found in a complex with MPO and LTF; interacts directly with MPO and LTF, which allows Fe(3+) incorporation into LTF, activation of CP ferroxidase activity and protection of CP antioxidant properties by MPO. Cu(2+) serves as cofactor. In terms of tissue distribution, expressed by the liver and secreted in plasma. Also expressed in the hypothalamus, spleen and uterus. No expression in the cortex, heart, intestine or kidney.

It is found in the secreted. The catalysed reaction is 4 Fe(2+) + O2 + 4 H(+) = 4 Fe(3+) + 2 H2O. The enzyme catalyses 4 Cu(+) + O2 + 4 H(+) = 4 Cu(2+) + 2 H2O. It catalyses the reaction a hydroperoxide + 2 glutathione = an alcohol + glutathione disulfide + H2O. It carries out the reaction 4 nitric oxide + O2 + 2 H2O = 4 nitrite + 4 H(+). The catalysed reaction is 2 glutathione + H2O2 = glutathione disulfide + 2 H2O. Its function is as follows. Multifunctional blue, copper-binding (6-7 atoms per molecule) glycoprotein. It has ferroxidase activity oxidizing Fe(2+) to Fe(3+) without releasing radical oxygen species. It is involved in iron transport across the cell membrane. Copper ions provide a large number of enzymatic activites. Oxidizes highly toxic ferrous ions to the ferric state for further incorporation onto apo-transferrins, catalyzes Cu(+) oxidation and promotes the oxidation of biogenic amines such as norepinephrin and serotonin. Provides Cu(2+) ions for the ascorbate-mediated deaminase degradation of the heparan sulfate chains of GPC1. Has glutathione peroxidase-like activity, can remove both hydrogen peroxide and lipid hydroperoxide in the presence of thiols. Also shows NO-oxidase and NO2 synthase activities that determine endocrine NO homeostasis. This Ovis aries (Sheep) protein is Ceruloplasmin (CP).